The following is a 176-amino-acid chain: Tubulin polymerization-promoting protein family member 3 (176 aa).

Positions 132–151 are disordered; it reads TGSHKERFDQTGKGKGKSGR. The span at 134–151 shows a compositional bias: basic and acidic residues; it reads SHKERFDQTGKGKGKSGR.

This sequence belongs to the TPPP family.

Its subcellular location is the cytoplasm. The protein resides in the cytoskeleton. Its function is as follows. Regulator of microtubule dynamic that has microtubule bundling activity. The chain is Tubulin polymerization-promoting protein family member 3 (tppp3) from Xenopus laevis (African clawed frog).